A 357-amino-acid chain; its full sequence is Peptide chain release factor 1 (357 aa).

N5-methylglutamine is present on Gln-234. The tract at residues 284-304 (RIEGERSEDRKSKIGTGDRSE) is disordered.

It belongs to the prokaryotic/mitochondrial release factor family. Post-translationally, methylated by PrmC. Methylation increases the termination efficiency of RF1.

It is found in the cytoplasm. Its function is as follows. Peptide chain release factor 1 directs the termination of translation in response to the peptide chain termination codons UAG and UAA. The polypeptide is Peptide chain release factor 1 (Pelagibacter ubique (strain HTCC1062)).